The primary structure comprises 937 residues: Aconitate hydratase A (937 aa).

The interval 410-450 is disordered; that stretch reads MANEGGFQPGSTSDLDNYNASWPGEGESAAANAEGRPSNPV. Residues 418–429 are compositionally biased toward polar residues; that stretch reads PGSTSDLDNYNA. A compositionally biased stretch (low complexity) spans 433–444; that stretch reads GEGESAAANAEG. [4Fe-4S] cluster contacts are provided by Cys475, Cys541, and Cys544.

The protein belongs to the aconitase/IPM isomerase family. Monomer. Requires [4Fe-4S] cluster as cofactor.

The enzyme catalyses citrate = D-threo-isocitrate. It catalyses the reaction (2S,3R)-3-hydroxybutane-1,2,3-tricarboxylate = 2-methyl-cis-aconitate + H2O. It participates in carbohydrate metabolism; tricarboxylic acid cycle; isocitrate from oxaloacetate: step 2/2. It functions in the pathway organic acid metabolism; propanoate degradation. Involved in the catabolism of short chain fatty acids (SCFA) via the tricarboxylic acid (TCA)(acetyl degradation route) and probably via the 2-methylcitrate cycle I (propionate degradation route). Catalyzes the reversible isomerization of citrate to isocitrate via cis-aconitate. Could catalyze the hydration of 2-methyl-cis-aconitate to yield (2R,3S)-2-methylisocitrate. The apo form of AcnA functions as a RNA-binding regulatory protein. The polypeptide is Aconitate hydratase A (acn) (Corynebacterium efficiens (strain DSM 44549 / YS-314 / AJ 12310 / JCM 11189 / NBRC 100395)).